The sequence spans 533 residues: Calcitonin receptor (533 aa).

A signal peptide spans 1-41; it reads MTPRRSRVKRRNLRKPKMRFLLVNRFTLLLLLLVSPTPVLQ. Topologically, residues 42-163 are extracellular; sequence APTNLTDSGL…FTSEKLQNAY (122 aa). Residues Asn45, Asn90, Asn142, and Asn147 are each glycosylated (N-linked (GlcNAc...) asparagine). Disulfide bonds link Cys72–Cys98, Cys89–Cys129, and Cys112–Cys151. The chain crosses the membrane as a helical span at residues 164 to 186; sequence VLYYLALVGHSLSIAALVASMLI. Residues 187 to 198 lie on the Cytoplasmic side of the membrane; that stretch reads FWIFKNLSCQRV. The helical transmembrane segment at 199–219 threads the bilayer; the sequence is TLHKHMFLTYILNSIIIIIHL. Residues 220 to 273 are Extracellular-facing; it reads VEVVPNGDLVRRDPMHIFHHNTHMWTMQWELSPPLPLSAHEGKMDPHASEVISC. Cys273 and Cys343 are disulfide-bonded. Residues 274-296 form a helical membrane-spanning segment; the sequence is KVLHFLHQYMMSCNYFWMLCEGI. At 297–313 the chain is on the cytoplasmic side; it reads YLHTLIVMAVFTDEQRL. The chain crosses the membrane as a helical span at residues 314-334; that stretch reads RWYYLLGWGFPIVPTIIHAIT. Topologically, residues 335-350 are extracellular; the sequence is RALYYNDNCWLSAETH. A helical membrane pass occupies residues 351–374; sequence LLYIIHGPVMVALVVNFFFLLNIV. Residues 375-394 are Cytoplasmic-facing; that stretch reads RVLVTKMRQTHEAESYMYLK. A helical transmembrane segment spans residues 395-413; the sequence is AVKATMVLVPLLGIQFVVF. The Extracellular portion of the chain corresponds to 414-421; the sequence is PWRPSNKV. A helical membrane pass occupies residues 422 to 448; that stretch reads LGKIYDYLMHSLIHFQGFFVATIYCFC. Residues 449–533 are Cytoplasmic-facing; the sequence is NHEVQVTLKR…MNVIQQDASA (85 aa).

It belongs to the G-protein coupled receptor 2 family. Heterodimer of CALCR and RAMP1, RAMP2 or RAMP3; the receptor complexes function as AMYR1, AMYR2 and AMYR3 receptors, respectively, and respond to amylin/IAPP, calcitonin/CT and CGRP1 ligands. Interacts with GPRASP2.

It localises to the cell membrane. Functionally, g protein-coupled receptor activated by ligand peptides amylin (IAPP), calcitonin (CT/CALCA) and calcitonin gene-related peptide type 1 (CGRP1/CALCA). CALCR interacts with receptor-activity-modifying proteins RAMP1, 2 and 3 to form receptor complexes AMYR1, 2 and 3, respectively. IAPP, CT and CGRP1 activate CALCR and AMYRs with distinct modes of receptor activation resulting in specific phenotypes. Ligand binding causes a conformation change that triggers signaling via guanine nucleotide-binding proteins (G proteins) and modulates the activity of downstream effectors. Activates cAMP-dependent pathway. The polypeptide is Calcitonin receptor (Mus musculus (Mouse)).